Consider the following 181-residue polypeptide: Protein Syd (181 aa).

It belongs to the Syd family.

The protein resides in the cell inner membrane. Interacts with the SecY protein in vivo. May bind preferentially to an uncomplexed state of SecY, thus functioning either as a chelating agent for excess SecY in the cell or as a regulatory factor that negatively controls the translocase function. This Salmonella agona (strain SL483) protein is Protein Syd.